The following is a 728-amino-acid chain: Glycine--tRNA ligase (728 aa).

The N-terminal 32 residues, 1-32, are a transit peptide targeting the mitochondrion; that stretch reads MPCLLPTLLRATRAALLLQSPRVVAAPASQRL. Positions 52-108 constitute a WHEP-TRS domain; that stretch reads LLAPLRLAVRQQGDFVRKLKEDKAPQVDVDRAVAELKARKRVLEAKELALQPKDDIV. An N6-acetyllysine modification is found at Lys-193. Residue Glu-288 participates in glycine binding. ATP-binding positions include 320–322 and 331–332; these read RNE and RV. Glu-339 contacts glycine. Tyr-442 is modified (phosphotyrosine). An ATP-binding site is contributed by 446–447; that stretch reads EI. Lys-490 carries the post-translational modification N6-acetyllysine. Position 565 to 567 (565 to 567) interacts with glycine; it reads EPS. Arg-572 contributes to the ATP binding site. The residue at position 689 (Ser-689) is a Phosphoserine. Thr-725 carries the post-translational modification Phosphothreonine.

It belongs to the class-II aminoacyl-tRNA synthetase family. As to quaternary structure, homodimer.

The protein resides in the cytoplasm. It is found in the mitochondrion. It localises to the cell projection. The protein localises to the axon. Its subcellular location is the secreted. The protein resides in the extracellular exosome. The catalysed reaction is tRNA(Gly) + glycine + ATP = glycyl-tRNA(Gly) + AMP + diphosphate. It catalyses the reaction 2 ATP + H(+) = P(1),P(4)-bis(5'-adenosyl) tetraphosphate + diphosphate. Its function is as follows. Catalyzes the ATP-dependent ligation of glycine to the 3'-end of its cognate tRNA, via the formation of an aminoacyl-adenylate intermediate (Gly-AMP). Also produces diadenosine tetraphosphate (Ap4A), a universal pleiotropic signaling molecule needed for cell regulation pathways, by direct condensation of 2 ATPs. Thereby, may play a special role in Ap4A homeostasis. The sequence is that of Glycine--tRNA ligase (Gars1) from Rattus norvegicus (Rat).